A 114-amino-acid polypeptide reads, in one-letter code: ATP synthase subunit c (114 aa).

The next 2 membrane-spanning stretches (helical) occupy residues 31 to 51 and 88 to 108; these read AVFY…AAGG and IETF…TGIF.

The protein belongs to the ATPase C chain family. As to quaternary structure, F-type ATPases have 2 components, F(1) - the catalytic core - and F(0) - the membrane proton channel. F(1) has five subunits: alpha(3), beta(3), gamma(1), delta(1), epsilon(1). F(0) has three main subunits: a(1), b(2) and c(10-14). The alpha and beta chains form an alternating ring which encloses part of the gamma chain. F(1) is attached to F(0) by a central stalk formed by the gamma and epsilon chains, while a peripheral stalk is formed by the delta and b chains.

The protein localises to the cell inner membrane. F(1)F(0) ATP synthase produces ATP from ADP in the presence of a proton or sodium gradient. F-type ATPases consist of two structural domains, F(1) containing the extramembraneous catalytic core and F(0) containing the membrane proton channel, linked together by a central stalk and a peripheral stalk. During catalysis, ATP synthesis in the catalytic domain of F(1) is coupled via a rotary mechanism of the central stalk subunits to proton translocation. In terms of biological role, key component of the F(0) channel; it plays a direct role in translocation across the membrane. A homomeric c-ring of between 10-14 subunits forms the central stalk rotor element with the F(1) delta and epsilon subunits. This is ATP synthase subunit c from Sulfurihydrogenibium sp. (strain YO3AOP1).